Reading from the N-terminus, the 405-residue chain is D-threonate kinase (405 aa).

Substrate-binding positions include Asp12, Arg59, and 88 to 91 (KVDS). ATP is bound by residues Ser243, 337–340 (GGDG), and Gly383.

Belongs to the four-carbon acid sugar kinase family.

It carries out the reaction D-threonate + ATP = 4-O-phospho-D-threonate + ADP + H(+). In terms of biological role, catalyzes the ATP-dependent phosphorylation of D-threonate to D-threonate 4-phosphate. Can also phosphorylate 4-hydroxy-L-threonine, with lower efficiency. The chain is D-threonate kinase from Bordetella bronchiseptica (strain ATCC BAA-588 / NCTC 13252 / RB50) (Alcaligenes bronchisepticus).